The sequence spans 377 residues: Pulmonary surfactant-associated protein B (377 aa).

An N-terminal signal peptide occupies residues 1 to 22 (MAKSHLLQWLLLLPTLCCPGAA). Positions 23–191 (ITSASSLECA…PHTQDFSEQQ (169 aa)) are excised as a propeptide. A Saposin A-type domain is found at 24–64 (TSASSLECAQGPQFWCQSLEHAVQCRALGHCLQEVWGHAGA). 3 consecutive Saposin B-type domains span residues 64–146 (ANDL…PRGQ), 195–272 (PLPF…STED), and 291–366 (QDTE…EAPA). 9 disulfides stabilise this stretch: Cys-68–Cys-142, Cys-71–Cys-136, Cys-99–Cys-111, Cys-199–Cys-268, Cys-202–Cys-262, Cys-226–Cys-237, Cys-295–Cys-362, Cys-298–Cys-356, and Cys-321–Cys-331. Residues 271 to 377 (EDAMGPALPA…PLQCFQTPHL (107 aa)) constitute a propeptide that is removed on maturation. Asn-307 carries N-linked (GlcNAc...) asparagine glycosylation.

As to quaternary structure, homodimer; disulfide-linked.

It is found in the secreted. The protein resides in the extracellular space. The protein localises to the surface film. Functionally, pulmonary surfactant-associated proteins promote alveolar stability by lowering the surface tension at the air-liquid interface in the peripheral air spaces. SP-B increases the collapse pressure of palmitic acid to nearly 70 millinewtons per meter. The polypeptide is Pulmonary surfactant-associated protein B (Sftpb) (Mus musculus (Mouse)).